A 224-amino-acid polypeptide reads, in one-letter code: Urease accessory protein UreF (224 aa).

Belongs to the UreF family. As to quaternary structure, ureD, UreF and UreG form a complex that acts as a GTP-hydrolysis-dependent molecular chaperone, activating the urease apoprotein by helping to assemble the nickel containing metallocenter of UreC. The UreE protein probably delivers the nickel.

The protein resides in the cytoplasm. Its function is as follows. Required for maturation of urease via the functional incorporation of the urease nickel metallocenter. This chain is Urease accessory protein UreF, found in Ectopseudomonas mendocina (strain ymp) (Pseudomonas mendocina).